Reading from the N-terminus, the 139-residue chain is D-ribose pyranase (139 aa).

Catalysis depends on H20, which acts as the Proton donor. Substrate is bound by residues D28, H106, and 128–130 (YAN).

Belongs to the RbsD / FucU family. RbsD subfamily. As to quaternary structure, homodecamer.

The protein resides in the cytoplasm. It carries out the reaction beta-D-ribopyranose = beta-D-ribofuranose. It functions in the pathway carbohydrate metabolism; D-ribose degradation; D-ribose 5-phosphate from beta-D-ribopyranose: step 1/2. Catalyzes the interconversion of beta-pyran and beta-furan forms of D-ribose. The polypeptide is D-ribose pyranase (Vibrio vulnificus (strain CMCP6)).